The sequence spans 211 residues: Cyclin-dependent kinase inhibitor 3 (211 aa).

A disordered region spans residues 1–20; it reads MKPPISIQASEFDSSDEEPV. Positions 1-34 are interaction with CDK2; it reads MKPPISIQASEFDSSDEEPVDEEQTPIQISWLPL. In terms of domain architecture, Tyrosine-protein phosphatase spans 32-200; that stretch reads LPLSRVNCSQ…FRDKLAAYLS (169 aa). The active-site Phosphocysteine intermediate is Cys-140.

Belongs to the protein-tyrosine phosphatase family. As to quaternary structure, interacts with cyclin-dependent kinases such as CDK1, CDK2 and CDK3. Does not interact with CDK4. Interacts (via C-terminus) with phosphorylated CDK2 (via C-terminal helix). Interacts with MS4A3 (via C-terminus); the interaction enhances CDKN3 enzymatic activity.

The protein resides in the cytoplasm. It is found in the perinuclear region. The catalysed reaction is O-phospho-L-tyrosyl-[protein] + H2O = L-tyrosyl-[protein] + phosphate. The enzyme catalyses O-phospho-L-seryl-[protein] + H2O = L-seryl-[protein] + phosphate. It carries out the reaction O-phospho-L-threonyl-[protein] + H2O = L-threonyl-[protein] + phosphate. May play a role in cell cycle regulation. Dual specificity phosphatase active toward substrates containing either phosphotyrosine or phosphoserine residues. Dephosphorylates CDK2 at 'Thr-160' in a cyclin-dependent manner. In Mus musculus (Mouse), this protein is Cyclin-dependent kinase inhibitor 3.